The following is a 197-amino-acid chain: ATP-dependent Clp protease proteolytic subunit (197 aa).

Catalysis depends on Ser-101, which acts as the Nucleophile. Residue His-126 is part of the active site.

This sequence belongs to the peptidase S14 family. As to quaternary structure, component of the chloroplastic Clp protease core complex.

The protein resides in the plastid. Its subcellular location is the chloroplast stroma. It catalyses the reaction Hydrolysis of proteins to small peptides in the presence of ATP and magnesium. alpha-casein is the usual test substrate. In the absence of ATP, only oligopeptides shorter than five residues are hydrolyzed (such as succinyl-Leu-Tyr-|-NHMec, and Leu-Tyr-Leu-|-Tyr-Trp, in which cleavage of the -Tyr-|-Leu- and -Tyr-|-Trp bonds also occurs).. In terms of biological role, cleaves peptides in various proteins in a process that requires ATP hydrolysis. Has a chymotrypsin-like activity. Plays a major role in the degradation of misfolded proteins. The polypeptide is ATP-dependent Clp protease proteolytic subunit (Daucus carota (Wild carrot)).